The sequence spans 324 residues: MEKKDLRIVYMGTPDFAVESLKRLVEGGYNVVGVITMPDKPMGRHGSVLQPSPVKEYAVSQGLRILQPEKLKDEAFIEELRSLQADLQIVVAFRMLPEIVWNMPRLGTFNLHASLLPQYRGAAPINWAVINGDTETGITTFFLKHEIDTGEIIQQVRVPIADTDNVEIVHDKLMYLGGDLVLETVDAILNGSVKPVPQESLIRQETELRPAPKIFKETCRIDWNKGVKQIYDFIRGLSPYPAAWTELCVADGTRQVLKIYETEKVFASHEMNIGDIRTDMKTYFQVAVKDGFINVLTLQLAGKKRMNVADFLRGYRTSDNNKVE.

Residue 114 to 117 (SLLP) coordinates (6S)-5,6,7,8-tetrahydrofolate.

This sequence belongs to the Fmt family.

It catalyses the reaction L-methionyl-tRNA(fMet) + (6R)-10-formyltetrahydrofolate = N-formyl-L-methionyl-tRNA(fMet) + (6S)-5,6,7,8-tetrahydrofolate + H(+). Functionally, attaches a formyl group to the free amino group of methionyl-tRNA(fMet). The formyl group appears to play a dual role in the initiator identity of N-formylmethionyl-tRNA by promoting its recognition by IF2 and preventing the misappropriation of this tRNA by the elongation apparatus. In Phocaeicola vulgatus (strain ATCC 8482 / DSM 1447 / JCM 5826 / CCUG 4940 / NBRC 14291 / NCTC 11154) (Bacteroides vulgatus), this protein is Methionyl-tRNA formyltransferase.